The primary structure comprises 225 residues: Claudin-8 (225 aa).

Topologically, residues 1–7 are cytoplasmic; that stretch reads MATYALQ. Residues 8–28 form a helical membrane-spanning segment; it reads MAALVLGGVGMVGTVAVTIMP. Residues 29–81 are Extracellular-facing; it reads QWRVSAFIESNIVVFENRWEGLWMNCMRHANIRMQCKVYDSLLALSPDLQASR. The chain crosses the membrane as a helical span at residues 82 to 102; sequence GLMCAASVLAFLAFMTAILGM. Residues 103–117 are Cytoplasmic-facing; that stretch reads KCTRCTGDDENVKSR. A helical membrane pass occupies residues 118–138; it reads ILLTAGIIFFITGLVVLIPVS. Residues 139–166 are Extracellular-facing; sequence WVANSIIRDFYNPLVDVALKRELGEALY. The chain crosses the membrane as a helical span at residues 167–187; it reads IGWTTALVLIAGGALFCCVFC. The Cytoplasmic portion of the chain corresponds to 188 to 225; the sequence is CTERSNSYRYSVPSHRTTQRSFHAEKRSPSIYSKSQYV. Residue lysine 213 forms a Glycyl lysine isopeptide (Lys-Gly) (interchain with G-Cter in ubiquitin) linkage. Residues 224-225 are interactions with TJP1, TJP2 and TJP3; the sequence is YV.

This sequence belongs to the claudin family. In terms of assembly, can form heteropolymeric strands with other claudins. Interacts with CLDN4. Directly interacts with TJP1/ZO-1, TJP2/ZO-2 and TJP3/ZO-3. Interacts with KLHL3. Ubiquitinated by the BCR(KLHL3) E3 ubiquitin ligase complex in the kidney, leading to its degradation. Expressed primarily in lung and kidney. Present in both cortical and medullar collecting ducts (at protein level).

Its subcellular location is the cell junction. It is found in the tight junction. The protein localises to the cell membrane. The catalysed reaction is chloride(in) = chloride(out). The enzyme catalyses bromide(in) = bromide(out). It carries out the reaction iodide(out) = iodide(in). It catalyses the reaction fluoride(in) = fluoride(out). Functionally, can associate with other claudins to regulate tight junction structural and functional strand dynamics. May coassemble with CLDN4 into tight junction strands containing anion-selective channels that convey paracellular chloride permeability in renal collecting ducts. Cannot form tight junction strands on its own. The sequence is that of Claudin-8 from Mus musculus (Mouse).